The following is a 383-amino-acid chain: Ribosomal RNA large subunit methyltransferase G (383 aa).

This sequence belongs to the methyltransferase superfamily. RlmG family.

The protein resides in the cytoplasm. The catalysed reaction is guanosine(1835) in 23S rRNA + S-adenosyl-L-methionine = N(2)-methylguanosine(1835) in 23S rRNA + S-adenosyl-L-homocysteine + H(+). Specifically methylates the guanine in position 1835 (m2G1835) of 23S rRNA. This chain is Ribosomal RNA large subunit methyltransferase G, found in Shewanella amazonensis (strain ATCC BAA-1098 / SB2B).